Here is a 206-residue protein sequence, read N- to C-terminus: Cytochrome c oxidase subunit 3 (206 aa).

Transmembrane regions (helical) follow at residues 26–46, 68–88, 97–117, 143–163, and 185–205; these read FLGF…FFGT, LVFI…LAMF, AMMI…GFEI, LVGL…VLLI, and WHFI…MGVG.

Belongs to the cytochrome c oxidase subunit 3 family.

It localises to the cell membrane. The enzyme catalyses 4 Fe(II)-[cytochrome c] + O2 + 8 H(+)(in) = 4 Fe(III)-[cytochrome c] + 2 H2O + 4 H(+)(out). The protein is Cytochrome c oxidase subunit 3 (ctaE) of Alkalihalophilus pseudofirmus (strain ATCC BAA-2126 / JCM 17055 / OF4) (Bacillus pseudofirmus).